Here is a 367-residue protein sequence, read N- to C-terminus: Teichoic acid glycerol-phosphate primase (367 aa).

This sequence belongs to the CDP-glycerol glycerophosphotransferase family.

The protein resides in the cell membrane. It catalyses the reaction N-acetyl-beta-D-mannosaminyl-(1-&gt;4)-N-acetyl-alpha-D-glucosaminyl di-trans,octa-cis-undecaprenyl diphosphate + CDP-glycerol = 4-O-[(2R)-glycerylphospho]-N-acetyl-beta-D-mannosaminyl-(1-&gt;4)-N-acetyl-alpha-D-glucosaminyl di-trans,octa-cis-undecaprenyl diphosphate + CMP + H(+). Its pathway is cell wall biogenesis; poly(ribitol phosphate) teichoic acid biosynthesis. Functionally, catalyzes the addition of a single glycerol phosphate residue to the prenoldiphosphate-linked disaccharide. This is Teichoic acid glycerol-phosphate primase (tarB) from Staphylococcus aureus (strain NCTC 8325 / PS 47).